Consider the following 89-residue polypeptide: Small ribosomal subunit protein uS15 (89 aa).

The protein belongs to the universal ribosomal protein uS15 family. As to quaternary structure, part of the 30S ribosomal subunit. Forms a bridge to the 50S subunit in the 70S ribosome, contacting the 23S rRNA.

One of the primary rRNA binding proteins, it binds directly to 16S rRNA where it helps nucleate assembly of the platform of the 30S subunit by binding and bridging several RNA helices of the 16S rRNA. In terms of biological role, forms an intersubunit bridge (bridge B4) with the 23S rRNA of the 50S subunit in the ribosome. In Azobacteroides pseudotrichonymphae genomovar. CFP2, this protein is Small ribosomal subunit protein uS15.